We begin with the raw amino-acid sequence, 1282 residues long: Clustered mitochondria protein homolog (1282 aa).

Residues 1 to 43 (MEQNNGTTEHPKEVLDQTNPSNEVTGVPNGNHAEGEGDQNAGE) are disordered. Residues 341–585 (DITRPQENYL…RITPLDVLWY (245 aa)) enclose the Clu domain. Composition is skewed to basic and acidic residues over residues 631–641 (EAEEKAEESKP) and 653–669 (ESEK…RVDI). Disordered regions lie at residues 631-669 (EAEE…RVDI) and 892-936 (RSQL…PAPA). Low complexity predominate over residues 924–936 (QASPRPAQSPAPA). A TPR repeat occupies 1003–1036 (AKLYHQLSMLYYQSDDKDAAVELARKAVIVTERT). Positions 1202–1282 (ANLPTRLGTK…SKQSTVKPSS (81 aa)) are disordered. Polar residues predominate over residues 1212-1223 (PQPQVGQTTSEM). Residues 1257-1272 (TKQKKRAAARNPKLRG) show a composition bias toward basic residues. Polar residues predominate over residues 1273-1282 (SKQSTVKPSS).

It belongs to the CLU family. May associate with the eukaryotic translation initiation factor 3 (eIF-3) complex.

The protein resides in the cytoplasm. Functionally, mRNA-binding protein involved in proper cytoplasmic distribution of mitochondria. This chain is Clustered mitochondria protein homolog, found in Coccidioides immitis (strain RS) (Valley fever fungus).